Here is a 406-residue protein sequence, read N- to C-terminus: Phosphopentomutase (406 aa).

The Mn(2+) site is built by aspartate 10, aspartate 305, histidine 310, aspartate 346, histidine 347, and histidine 358.

It belongs to the phosphopentomutase family. Mn(2+) is required as a cofactor.

The protein resides in the cytoplasm. It catalyses the reaction 2-deoxy-alpha-D-ribose 1-phosphate = 2-deoxy-D-ribose 5-phosphate. The catalysed reaction is alpha-D-ribose 1-phosphate = D-ribose 5-phosphate. It participates in carbohydrate degradation; 2-deoxy-D-ribose 1-phosphate degradation; D-glyceraldehyde 3-phosphate and acetaldehyde from 2-deoxy-alpha-D-ribose 1-phosphate: step 1/2. Functionally, isomerase that catalyzes the conversion of deoxy-ribose 1-phosphate (dRib-1-P) and ribose 1-phosphate (Rib-1-P) to deoxy-ribose 5-phosphate (dRib-5-P) and ribose 5-phosphate (Rib-5-P), respectively. This Methylobacterium radiotolerans (strain ATCC 27329 / DSM 1819 / JCM 2831 / NBRC 15690 / NCIMB 10815 / 0-1) protein is Phosphopentomutase.